Reading from the N-terminus, the 318-residue chain is Elongation factor Ts, mitochondrial (318 aa).

Residues methionine 1 to tyrosine 18 constitute a mitochondrion transit peptide.

This sequence belongs to the EF-Ts family.

The protein resides in the mitochondrion. Functionally, associates with the EF-Tu.GDP complex and induces the exchange of GDP to GTP. It remains bound to the aminoacyl-tRNA.EF-Tu.GTP complex up to the GTP hydrolysis stage on the ribosome. In Drosophila melanogaster (Fruit fly), this protein is Elongation factor Ts, mitochondrial.